Here is a 305-residue protein sequence, read N- to C-terminus: Sulfate adenylyltransferase subunit 2 (305 aa).

It belongs to the PAPS reductase family. CysD subfamily. Heterodimer composed of CysD, the smaller subunit, and CysN.

The enzyme catalyses sulfate + ATP + H(+) = adenosine 5'-phosphosulfate + diphosphate. It participates in sulfur metabolism; hydrogen sulfide biosynthesis; sulfite from sulfate: step 1/3. Its function is as follows. With CysN forms the ATP sulfurylase (ATPS) that catalyzes the adenylation of sulfate producing adenosine 5'-phosphosulfate (APS) and diphosphate, the first enzymatic step in sulfur assimilation pathway. APS synthesis involves the formation of a high-energy phosphoric-sulfuric acid anhydride bond driven by GTP hydrolysis by CysN coupled to ATP hydrolysis by CysD. This is Sulfate adenylyltransferase subunit 2 from Pseudomonas fluorescens (strain Pf0-1).